We begin with the raw amino-acid sequence, 1080 residues long: MTTKPQNSKQGLAEGEMDVSSLFKRTEVIGRGKFGVVYKGYNVKTGRVYAIKVLNLDSDSDEVEDVQREIQFLASLKQISNITRYYGSYLKDTSLWIIMEHCAGGSLRSLLRPGKIDEKYIGVIMRELLVALKCIHKDNVIHRDIKAANVLITNEGNVKLCDFGVAAQVNQTSLRRQTMAGTPYWMAPEVIMEGVYYDTKVDIWSLGITTYEIATGNPPYCDVEALRAMQLIIKSKPPRLEDRSYSTSLKEFIALCLDEDPKERLSADDLLKSKFIRAHKATPTSILKELISRYLLFRDKNKNKYKIEGSIPENEPSKPSEAPKPSQNGGGDEAQKSIASNDNEIKRVNEGDVEMKWDFDSLSSSDYIIENNINLDALAEDNNEWATAQHDLFNYAYPDEDSYYFDPTSHNTRPFVYQGTTIGKGYPGTIAQNSTLNAPVTNNYTNSKYPSKMVAGTTNTSGTHTAGPMTSSKRLESKAPKQLLELFEDNEIITAENDVNTEAPKISKSISSLNAGNSSRDDFIPSISNEVNGNINNNKMRPHLPPLSSGNNYYSQSTPALPLLQTKFNKTSKGPPTSGLTTAPTSIEIEIPEELPNSALPTPASADPVLIPSTKARSSTVTAGTPSSSSSIQYKSPSNVPRRLTVSNNRPEHCPSTITNQKLGSAVASNSGISSTPNNSNNYNNNTDSENSRGSSGSNTANSTQMGITNPGNVTKLSTHKASSPSRPLFGVGTSPNRKPAGSPTQNIGHNSTHTNLAPPPTMKPMANSKDNKDILLQPLNSIPSSSTLNTISGNSSNNLTSSNYFSNEKEGSRVNGDFKRNNPNLKLQMPLPTPVVRNKLLDPNTATSQNNNGMPGSAGISTNENINQFGFNTSSASNIPVSMTPISEKHIDFGGKIKRSQSISNRKNSSASEHPLNILGSSVSGNVSGIGNNNVGSNNNSGPNNSVPLSANTGNTTIKANSTTIATSSSAAASTTAPISQQTIPSGTQFNHILSSAATAANSVNSLGFGMCPPPQSLQMEMFLDLESFLPGKQRRVDRKPQVLKELENLLQMFEEGLPCIEHALKEQLISTPIKDNEH.

The Protein kinase domain occupies 23–276; it reads FKRTEVIGRG…ADDLLKSKFI (254 aa). ATP-binding positions include 29–37 and lysine 52; that span reads IGRGKFGVV. Residue aspartate 144 is the Proton acceptor of the active site. Disordered regions lie at residues 308-347, 615-760, 787-831, and 901-956; these read EGSI…EIKR, KARS…LAPP, STLN…LQMP, and SQSI…NTGN. Low complexity predominate over residues 312–326; sequence PENEPSKPSEAPKPS. The segment covering 615–626 has biased composition (polar residues); sequence KARSSTVTAGTP. Residues 627 to 638 show a composition bias toward low complexity; it reads SSSSSIQYKSPS. The span at 656 to 673 shows a compositional bias: polar residues; the sequence is STITNQKLGSAVASNSGI. A compositionally biased stretch (low complexity) spans 674-689; it reads SSTPNNSNNYNNNTDS. The segment covering 693 to 726 has biased composition (polar residues); that stretch reads RGSSGSNTANSTQMGITNPGNVTKLSTHKASSPS. Serine 735 carries the phosphoserine modification. The span at 743–756 shows a compositional bias: polar residues; that stretch reads SPTQNIGHNSTHTN. A compositionally biased stretch (low complexity) spans 787-807; the sequence is STLNTISGNSSNNLTSSNYFS. A compositionally biased stretch (basic and acidic residues) spans 808–821; that stretch reads NEKEGSRVNGDFKR. Over residues 901-913 the composition is skewed to polar residues; the sequence is SQSISNRKNSSAS. A compositionally biased stretch (low complexity) spans 918 to 956; it reads NILGSSVSGNVSGIGNNNVGSNNNSGPNNSVPLSANTGN.

This sequence belongs to the protein kinase superfamily. Ser/Thr protein kinase family. In terms of assembly, interacts with CDC31.

The catalysed reaction is L-seryl-[protein] + ATP = O-phospho-L-seryl-[protein] + ADP + H(+). It catalyses the reaction L-threonyl-[protein] + ATP = O-phospho-L-threonyl-[protein] + ADP + H(+). Protein kinase involved in morphogenesis and cell integrity. This chain is Serine/threonine-protein kinase KIC1 (KIC1), found in Saccharomyces cerevisiae (strain ATCC 204508 / S288c) (Baker's yeast).